A 473-amino-acid chain; its full sequence is Cyprosin (473 aa).

The propeptide at 1-33 (LKKRKVNILNHPGEHAGSNDANARRKYGVRGNF) is activation peptide. Residues 51–470 (YFGEIGIGTP…DYGNLRVGFA (420 aa)) enclose the Peptidase A1 domain. Aspartate 69 is a catalytic residue. 2 cysteine pairs are disulfide-bonded: cysteine 82/cysteine 88 and cysteine 247/cysteine 251. Aspartate 256 is a catalytic residue. A Saposin B-type domain is found at 281-384 (VMSQQCKSLV…DKLCERLPSP (104 aa)). Intrachain disulfides connect cysteine 286–cysteine 378, cysteine 311–cysteine 350, cysteine 317–cysteine 347, and cysteine 392–cysteine 429. An N-linked (GlcNAc...) asparagine glycan is attached at asparagine 364.

Belongs to the peptidase A1 family. Mostly present in the violet parts of styles and corollas of mature flowers.

This chain is Cyprosin (CYPRO1), found in Cynara cardunculus (Cardoon).